A 321-amino-acid chain; its full sequence is Fe-S cluster assembly protein DRE2 (321 aa).

An N-terminal SAM-like domain region spans residues 1-140; the sequence is MNNTAHSMSE…RRPASSSVAE (140 aa). Residues 128 to 138 show a composition bias toward polar residues; sequence IESRRPASSSV. The interval 128-166 is disordered; the sequence is IESRRPASSSVAEKDSTASSGMGAVKLRRKPNENGGHQQ. Residues 140-177 are linker; sequence EKDSTASSGMGAVKLRRKPNENGGHQQKKALLWATQPE. Positions 202, 217, 220, and 222 each coordinate [2Fe-2S] cluster. The segment at 202–222 is fe-S binding site A; the sequence is CTVDFSAPRTRRKRACKGCTC. The disordered stretch occupies residues 239 to 263; the sequence is QLDPSEVGGTGGKRTEVTTTVKGPN. [4Fe-4S] cluster is bound by residues C283, C286, C294, and C297. Short sequence motifs (cx2C motif) lie at residues 283-286 and 294-297; these read CGSC and CSSC. The tract at residues 283–297 is fe-S binding site B; the sequence is CGSCFLGDAFRCSSC.

The protein belongs to the anamorsin family. As to quaternary structure, monomer. Interacts with TAH18. Interacts with MIA40. [2Fe-2S] cluster serves as cofactor. Requires [4Fe-4S] cluster as cofactor.

The protein localises to the cytoplasm. The protein resides in the mitochondrion intermembrane space. Functionally, component of the cytosolic iron-sulfur (Fe-S) protein assembly (CIA) machinery required for the maturation of extramitochondrial Fe-S proteins. Part of an electron transfer chain functioning in an early step of cytosolic Fe-S biogenesis, facilitating the de novo assembly of a [4Fe-4S] cluster on the scaffold complex CFD1-NBP35. Electrons are transferred to DRE2 from NADPH via the FAD- and FMN-containing protein TAH18. TAH18-DRE2 are also required for the assembly of the diferric tyrosyl radical cofactor of ribonucleotide reductase (RNR), probably by providing electrons for reduction during radical cofactor maturation in the catalytic small subunit RNR2. The sequence is that of Fe-S cluster assembly protein DRE2 from Malassezia globosa (strain ATCC MYA-4612 / CBS 7966) (Dandruff-associated fungus).